The primary structure comprises 335 residues: Dihydroorotate dehydrogenase (quinone) (335 aa).

FMN is bound by residues 61–65 (AGLDK) and threonine 85. Position 65 (lysine 65) interacts with substrate. Position 110–114 (110–114 (NRMGF)) interacts with substrate. 2 residues coordinate FMN: asparagine 138 and asparagine 171. Asparagine 171 lines the substrate pocket. Serine 174 functions as the Nucleophile in the catalytic mechanism. Substrate is bound at residue asparagine 176. Residues lysine 216 and threonine 244 each contribute to the FMN site. Residue 245 to 246 (NT) coordinates substrate. FMN-binding positions include glycine 267, glycine 296, and 317-318 (YS).

This sequence belongs to the dihydroorotate dehydrogenase family. Type 2 subfamily. In terms of assembly, monomer. FMN serves as cofactor.

It localises to the cell membrane. The catalysed reaction is (S)-dihydroorotate + a quinone = orotate + a quinol. Its pathway is pyrimidine metabolism; UMP biosynthesis via de novo pathway; orotate from (S)-dihydroorotate (quinone route): step 1/1. Functionally, catalyzes the conversion of dihydroorotate to orotate with quinone as electron acceptor. This Pseudoalteromonas atlantica (strain T6c / ATCC BAA-1087) protein is Dihydroorotate dehydrogenase (quinone).